Reading from the N-terminus, the 416-residue chain is Calreticulin (416 aa).

A glycan (N-linked (GlcNAc...) asparagine) is linked at Asn54. Cys108 and Cys140 are disulfide-bonded. Residues Tyr112, Lys114, Tyr131, and Asp138 each contribute to the an alpha-D-glucoside site. 7 tandem repeats follow at residues 194 to 205 (KQSGSVYTDWDI), 213 to 224 (DPEAKKPEDWED), 230 to 241 (DPEDKKPEGYDD), 248 to 259 (DPEAKKPEDWDD), 263 to 273 (GEWTAPTIPNP), 277 to 287 (GEWKPKKIKNP), and 291 to 301 (GKWKAPMIDNP). Residues 194 to 259 (KQSGSVYTDW…EAKKPEDWDD (66 aa)) form a 4 X approximate repeats region. The segment at 209–281 (KQIKDPEAKK…NPDYKGEWKP (73 aa)) is disordered. Positions 210–255 (QIKDPEAKKPEDWEDKEYIPDPEDKKPEGYDDIPKEITDPEAKKPE) are enriched in basic and acidic residues. The tract at residues 263–301 (GEWTAPTIPNPDYKGEWKPKKIKNPNFKGKWKAPMIDNP) is 3 X approximate repeats. Glu321 contacts an alpha-D-glucoside. Over residues 349 to 378 (ETWGKNKDAEKAAFDEAEKKKEEEEAKDDP) the composition is skewed to basic and acidic residues. A disordered region spans residues 349–416 (ETWGKNKDAE…EDDEDVHDEL (68 aa)). The segment covering 379-416 (TESDDEKPDEEGESDGEGDDESKDIDNEEDDEDVHDEL) has biased composition (acidic residues). Residues 413-416 (HDEL) carry the Prevents secretion from ER motif.

It belongs to the calreticulin family.

Its subcellular location is the endoplasmic reticulum lumen. Its function is as follows. Molecular calcium-binding chaperone promoting folding, oligomeric assembly and quality control in the ER via the calreticulin/calnexin cycle. This lectin may interact transiently with almost all of the monoglucosylated glycoproteins that are synthesized in the ER. The sequence is that of Calreticulin from Berberis stolonifera (Barberry).